The primary structure comprises 249 residues: Globin-like protein 9 (249 aa).

The segment at 20–43 is disordered; that stretch reads TNKGPNGLARRGTQRGCSRSKSTR. Residues 52-205 enclose the Globin domain; it reads SLTFSQKQAL…LIDELRGGFE (154 aa). Residues H116 and H148 each contribute to the heme site.

The protein belongs to the globin family.

The protein is Globin-like protein 9 (glb-9) of Caenorhabditis elegans.